A 399-amino-acid chain; its full sequence is Tyrosine--tRNA ligase (399 aa).

Residues 42–51 (PTAPDIHLGH) carry the 'HIGH' region motif. A 'KMSKS' region motif is present at residues 226–230 (KMSKS). Position 229 (K229) interacts with ATP. The S4 RNA-binding domain maps to 337–398 (LTIGYILQRA…GKRRFAKVKV (62 aa)).

This sequence belongs to the class-I aminoacyl-tRNA synthetase family. TyrS type 2 subfamily. Homodimer.

The protein localises to the cytoplasm. The enzyme catalyses tRNA(Tyr) + L-tyrosine + ATP = L-tyrosyl-tRNA(Tyr) + AMP + diphosphate + H(+). Functionally, catalyzes the attachment of tyrosine to tRNA(Tyr) in a two-step reaction: tyrosine is first activated by ATP to form Tyr-AMP and then transferred to the acceptor end of tRNA(Tyr). This chain is Tyrosine--tRNA ligase, found in Coxiella burnetii (strain RSA 493 / Nine Mile phase I).